The following is a 255-amino-acid chain: NAD kinase (255 aa).

The active-site Proton acceptor is the aspartate 44. NAD(+) is bound by residues 44-45 (DG), histidine 49, 114-115 (NE), aspartate 144, alanine 152, 155-160 (SAYNLS), and glutamine 216.

It belongs to the NAD kinase family. It depends on a divalent metal cation as a cofactor.

Its subcellular location is the cytoplasm. It carries out the reaction NAD(+) + ATP = ADP + NADP(+) + H(+). Functionally, involved in the regulation of the intracellular balance of NAD and NADP, and is a key enzyme in the biosynthesis of NADP. Catalyzes specifically the phosphorylation on 2'-hydroxyl of the adenosine moiety of NAD to yield NADP. In Rickettsia peacockii (strain Rustic), this protein is NAD kinase.